Here is a 255-residue protein sequence, read N- to C-terminus: uncharacterized protein (255 aa).

In terms of domain architecture, HTH deoR-type spans arginine 4–glutamine 59. The H-T-H motif DNA-binding region spans valine 21–aspartate 40.

This is an uncharacterized protein from Staphylococcus epidermidis (strain ATCC 12228 / FDA PCI 1200).